The primary structure comprises 465 residues: Triplex capsid protein 1 (465 aa).

The protein belongs to the herpesviridae TRX1 protein family. Interacts with TRX2, MCP and capsid vertex component 2/CVC2.

The protein resides in the virion. Its subcellular location is the host nucleus. Its function is as follows. Structural component of the T=16 icosahedral capsid. The capsid is composed of pentamers and hexamers of major capsid protein/MCP, which are linked together by heterotrimers called triplexes. These triplexes are formed by a single molecule of triplex protein 1/TRX1 and two copies of triplex protein 2/TRX2. Additionally, TRX1 is required for efficient transport of TRX2 to the nucleus, which is the site of capsid assembly. This chain is Triplex capsid protein 1, found in Homo sapiens (Human).